The sequence spans 468 residues: DNA polymerase IV 1 (468 aa).

The UmuC domain occupies 6–188 (VLHLDMDAFF…LPVRRLWGIG (183 aa)). Mg(2+)-binding residues include D10 and D105. The active site involves E106.

This sequence belongs to the DNA polymerase type-Y family. As to quaternary structure, monomer. Mg(2+) is required as a cofactor.

The protein resides in the cytoplasm. It carries out the reaction DNA(n) + a 2'-deoxyribonucleoside 5'-triphosphate = DNA(n+1) + diphosphate. Poorly processive, error-prone DNA polymerase involved in untargeted mutagenesis. Copies undamaged DNA at stalled replication forks, which arise in vivo from mismatched or misaligned primer ends. These misaligned primers can be extended by PolIV. Exhibits no 3'-5' exonuclease (proofreading) activity. May be involved in translesional synthesis, in conjunction with the beta clamp from PolIII. This chain is DNA polymerase IV 1 (dinB1), found in Mycobacterium tuberculosis (strain CDC 1551 / Oshkosh).